A 448-amino-acid polypeptide reads, in one-letter code: Trk system potassium uptake protein TrkA homolog 2 (448 aa).

Residues 1-124 (MKAVVIGAGE…RAQVGVDIMI (124 aa)) form the RCK N-terminal 1 domain. NAD(+) is bound by residues 7–11 (GAGEV), E29, 70–71 (TG), and R101. One can recognise an RCK C-terminal 1 domain in the interval 144–225 (IDAEMFAGGK…MADLENVFGN (82 aa)). The RCK N-terminal 2 domain occupies 230–348 (RNRILLIGCG…FEMVGIDIAV (119 aa)). An NAD(+)-binding site is contributed by 232-262 (RILLIGCGIVGFYLAKIIDKDENADLKVIEY). The RCK C-terminal 2 domain occupies 368 to 448 (EALATIEGEK…AVRSVEKLFK (81 aa)).

Functionally, part of a potassium transport system. This Methanosarcina mazei (strain ATCC BAA-159 / DSM 3647 / Goe1 / Go1 / JCM 11833 / OCM 88) (Methanosarcina frisia) protein is Trk system potassium uptake protein TrkA homolog 2 (trkA2).